Here is a 565-residue protein sequence, read N- to C-terminus: CTP synthase (565 aa).

The tract at residues 1–272 is amidoligase domain; the sequence is MARPKNVKHI…DKRVLKKLGI (272 aa). S18 is a binding site for CTP. S18 contributes to the UTP binding site. Residue 19 to 24 participates in ATP binding; the sequence is SLGKGI. Y59 serves as a coordination point for L-glutamine. Residue D76 coordinates ATP. Mg(2+) contacts are provided by D76 and E146. Residues 153–155, 193–198, and K229 each bind CTP; these read DIE and KTKPTQ. Residues 193–198 and K229 contribute to the UTP site; that span reads KTKPTQ. The region spanning 299 to 543 is the Glutamine amidotransferase type-1 domain; sequence TIAVCGKYTE…VAAAKAFAFG (245 aa). Residue G363 coordinates L-glutamine. C390 serves as the catalytic Nucleophile; for glutamine hydrolysis. L-glutamine is bound by residues 391–394, E414, and R471; that span reads LGMQ. Active-site residues include H516 and E518.

Belongs to the CTP synthase family. As to quaternary structure, homotetramer.

It catalyses the reaction UTP + L-glutamine + ATP + H2O = CTP + L-glutamate + ADP + phosphate + 2 H(+). It carries out the reaction L-glutamine + H2O = L-glutamate + NH4(+). The catalysed reaction is UTP + NH4(+) + ATP = CTP + ADP + phosphate + 2 H(+). The protein operates within pyrimidine metabolism; CTP biosynthesis via de novo pathway; CTP from UDP: step 2/2. With respect to regulation, allosterically activated by GTP, when glutamine is the substrate; GTP has no effect on the reaction when ammonia is the substrate. The allosteric effector GTP functions by stabilizing the protein conformation that binds the tetrahedral intermediate(s) formed during glutamine hydrolysis. Inhibited by the product CTP, via allosteric rather than competitive inhibition. Its function is as follows. Catalyzes the ATP-dependent amination of UTP to CTP with either L-glutamine or ammonia as the source of nitrogen. Regulates intracellular CTP levels through interactions with the four ribonucleotide triphosphates. This chain is CTP synthase, found in Chlorobium phaeobacteroides (strain BS1).